A 257-amino-acid polypeptide reads, in one-letter code: Thiazole synthase (257 aa).

K97 acts as the Schiff-base intermediate with DXP in catalysis. Residues G158, 184–185, and 206–207 contribute to the 1-deoxy-D-xylulose 5-phosphate site; these read AG and NT.

The protein belongs to the ThiG family. Homotetramer. Forms heterodimers with either ThiH or ThiS.

It is found in the cytoplasm. It carries out the reaction [ThiS sulfur-carrier protein]-C-terminal-Gly-aminoethanethioate + 2-iminoacetate + 1-deoxy-D-xylulose 5-phosphate = [ThiS sulfur-carrier protein]-C-terminal Gly-Gly + 2-[(2R,5Z)-2-carboxy-4-methylthiazol-5(2H)-ylidene]ethyl phosphate + 2 H2O + H(+). Its pathway is cofactor biosynthesis; thiamine diphosphate biosynthesis. Catalyzes the rearrangement of 1-deoxy-D-xylulose 5-phosphate (DXP) to produce the thiazole phosphate moiety of thiamine. Sulfur is provided by the thiocarboxylate moiety of the carrier protein ThiS. In vitro, sulfur can be provided by H(2)S. The chain is Thiazole synthase from Desulforamulus reducens (strain ATCC BAA-1160 / DSM 100696 / MI-1) (Desulfotomaculum reducens).